The following is a 366-amino-acid chain: S-adenosylmethionine:tRNA ribosyltransferase-isomerase (366 aa).

Belongs to the QueA family. In terms of assembly, monomer.

The protein localises to the cytoplasm. It carries out the reaction 7-aminomethyl-7-carbaguanosine(34) in tRNA + S-adenosyl-L-methionine = epoxyqueuosine(34) in tRNA + adenine + L-methionine + 2 H(+). Its pathway is tRNA modification; tRNA-queuosine biosynthesis. In terms of biological role, transfers and isomerizes the ribose moiety from AdoMet to the 7-aminomethyl group of 7-deazaguanine (preQ1-tRNA) to give epoxyqueuosine (oQ-tRNA). This is S-adenosylmethionine:tRNA ribosyltransferase-isomerase from Bradyrhizobium diazoefficiens (strain JCM 10833 / BCRC 13528 / IAM 13628 / NBRC 14792 / USDA 110).